We begin with the raw amino-acid sequence, 106 residues long: MSKNFEWVTPDSDLLERESTKVQPPKLYNVVLNNDDYTPMDFVIEVLERFFSHDIDKATQIMLKIHYEGKAICGTYSAEIAETKVAQVTMYSRENEHPLLCTMEQA.

The protein belongs to the ClpS family. Binds to the N-terminal domain of the chaperone ClpA.

Involved in the modulation of the specificity of the ClpAP-mediated ATP-dependent protein degradation. This Vibrio campbellii (strain ATCC BAA-1116) protein is ATP-dependent Clp protease adapter protein ClpS.